The following is a 498-amino-acid chain: Probable malate:quinone oxidoreductase 2 (498 aa).

Belongs to the MQO family. The cofactor is FAD.

It carries out the reaction (S)-malate + a quinone = a quinol + oxaloacetate. It functions in the pathway carbohydrate metabolism; tricarboxylic acid cycle; oxaloacetate from (S)-malate (quinone route): step 1/1. In Staphylococcus epidermidis (strain ATCC 12228 / FDA PCI 1200), this protein is Probable malate:quinone oxidoreductase 2.